Consider the following 405-residue polypeptide: L-carnitine CoA-transferase (405 aa).

The CoA site is built by Lys-97 and Arg-104. Residue Asp-169 is the Nucleophile of the active site.

It belongs to the CoA-transferase III family. CaiB subfamily. In terms of assembly, homodimer.

Its subcellular location is the cytoplasm. The enzyme catalyses crotonobetainyl-CoA + (R)-carnitine = crotonobetaine + (R)-carnitinyl-CoA. The catalysed reaction is 4-(trimethylamino)butanoyl-CoA + (R)-carnitine = (R)-carnitinyl-CoA + 4-(trimethylamino)butanoate. Its pathway is amine and polyamine metabolism; carnitine metabolism. Catalyzes the reversible transfer of the CoA moiety from gamma-butyrobetainyl-CoA to L-carnitine to generate L-carnitinyl-CoA and gamma-butyrobetaine. Is also able to catalyze the reversible transfer of the CoA moiety from gamma-butyrobetainyl-CoA or L-carnitinyl-CoA to crotonobetaine to generate crotonobetainyl-CoA. In Escherichia coli O17:K52:H18 (strain UMN026 / ExPEC), this protein is L-carnitine CoA-transferase.